The following is a 284-amino-acid chain: tRNA uridine(34) hydroxylase (284 aa).

The 95-residue stretch at 132–226 (TGRPVVMLDT…YFEEVGGAHY (95 aa)) folds into the Rhodanese domain. The Cysteine persulfide intermediate role is filled by Cys186.

Belongs to the TrhO family.

It carries out the reaction uridine(34) in tRNA + AH2 + O2 = 5-hydroxyuridine(34) in tRNA + A + H2O. Its function is as follows. Catalyzes oxygen-dependent 5-hydroxyuridine (ho5U) modification at position 34 in tRNAs. This is tRNA uridine(34) hydroxylase from Burkholderia cenocepacia (strain ATCC BAA-245 / DSM 16553 / LMG 16656 / NCTC 13227 / J2315 / CF5610) (Burkholderia cepacia (strain J2315)).